The following is a 491-amino-acid chain: Pyruvate carboxylase subunit A (491 aa).

A Biotin carboxylation domain is found at 1–445; sequence MFSKILVANR…HTHFVDEYRR (445 aa). ATP is bound by residues Lys-116, Glu-200, and His-235. The ATP-grasp domain maps to 120–316; it reads KKLMKKAGVP…LVKEQIRVAS (197 aa). Arg-291 is an active-site residue.

In terms of assembly, heterooctamer of four A and four B subunits. The cofactor is Mg(2+). It depends on Mn(2+) as a cofactor. Co(2+) is required as a cofactor.

The enzyme catalyses hydrogencarbonate + pyruvate + ATP = oxaloacetate + ADP + phosphate + H(+). Its pathway is carbohydrate biosynthesis; gluconeogenesis. Inhibited by ADP and alpha-ketoglutarate. Its function is as follows. Pyruvate carboxylase catalyzes a 2-step reaction, involving the ATP-dependent carboxylation of the covalently attached biotin in the first step and the transfer of the carboxyl group to pyruvate in the second. The chain is Pyruvate carboxylase subunit A (pycA) from Methanothermobacter thermautotrophicus (strain ATCC 29096 / DSM 1053 / JCM 10044 / NBRC 100330 / Delta H) (Methanobacterium thermoautotrophicum).